A 32-amino-acid polypeptide reads, in one-letter code: Yop proteins translocation protein A (32 aa).

This is Yop proteins translocation protein A (yscA) from Yersinia enterocolitica serotype O:8 / biotype 1B (strain NCTC 13174 / 8081).